A 213-amino-acid polypeptide reads, in one-letter code: MGREFIDIFEDWAPLYDDSVTGKDAQYEKVFEHYDQILSEVVENSQDKVLEFGVGTGNLTKQLLNAGKTVIGIEPSTAMREIAKKKLPGITILDGDFINFPTLTMPIDSIVSTYAFHHLTDEEKEQAIKQFHEVLQPEGMVVFGDTMFETKEAKQNQIDLARKQGFKALAEDLEREYYPIIKTVRNAFEKYNFHVSFKQMNDFVWIISAKKLA.

S-adenosyl-L-methionine is bound by residues Gly-53, Glu-74, and Asp-96.

The protein belongs to the methyltransferase superfamily. YrrT family.

In terms of biological role, could be a S-adenosyl-L-methionine-dependent methyltransferase. This is an uncharacterized protein from Oceanobacillus iheyensis (strain DSM 14371 / CIP 107618 / JCM 11309 / KCTC 3954 / HTE831).